A 61-amino-acid chain; its full sequence is Photosystem II assembly protein Psb34 (61 aa).

A helical membrane pass occupies residues 36 to 56 (LIMAAITVVLVAGLIAVAVVA).

This sequence belongs to the Psb34 family. As to quaternary structure, part of the photosystem II (PSII) assembly intermediate RC47 complex (with D1, D2, CP47, PsbE, PsbF, PsbH, Psb27 and Psb28); minor amounts are found in other PSII complexes, including mature, dimeric PSII with PsbO and PsbV. No HliA or HliB are detected in any of these complexes. Its interaction with PSII requires both CP47 (psbB) and PsbH. HliA/HliB and Psb34 probably bind to a similar site on CP47; their binding seems to be mutually exclusive.

Its subcellular location is the cellular thylakoid membrane. Functionally, involved in photosystem II (PSII) assembly and/or repair. Probably involved in conversion of late PSII assembly intermediates into mature dimeric PSII, it may mediate the optimal equlibrium of HliA/HliB among the intermediates containing CP47 (psbB) to facilitate photoprotection during assembly. This chain is Photosystem II assembly protein Psb34, found in Synechocystis sp. (strain ATCC 27184 / PCC 6803 / Kazusa).